Here is a 284-residue protein sequence, read N- to C-terminus: Acetylglutamate kinase (284 aa).

Residues 66-67, Arg88, and Asn179 each bind substrate; that span reads GG.

This sequence belongs to the acetylglutamate kinase family. ArgB subfamily.

The protein localises to the cytoplasm. The enzyme catalyses N-acetyl-L-glutamate + ATP = N-acetyl-L-glutamyl 5-phosphate + ADP. Its pathway is amino-acid biosynthesis; L-arginine biosynthesis; N(2)-acetyl-L-ornithine from L-glutamate: step 2/4. Its function is as follows. Catalyzes the ATP-dependent phosphorylation of N-acetyl-L-glutamate. The sequence is that of Acetylglutamate kinase from Actinobacillus pleuropneumoniae serotype 3 (strain JL03).